Here is a 129-residue protein sequence, read N- to C-terminus: Small ribosomal subunit protein uS9 (129 aa).

It belongs to the universal ribosomal protein uS9 family.

The chain is Small ribosomal subunit protein uS9 from Pelodictyon phaeoclathratiforme (strain DSM 5477 / BU-1).